We begin with the raw amino-acid sequence, 280 residues long: Putative pyruvate, phosphate dikinase regulatory protein 1 (280 aa).

Position 152–159 (152–159 (GVSRTSKT)) interacts with ADP.

Belongs to the pyruvate, phosphate/water dikinase regulatory protein family. PDRP subfamily.

The enzyme catalyses N(tele)-phospho-L-histidyl/L-threonyl-[pyruvate, phosphate dikinase] + ADP = N(tele)-phospho-L-histidyl/O-phospho-L-threonyl-[pyruvate, phosphate dikinase] + AMP + H(+). The catalysed reaction is N(tele)-phospho-L-histidyl/O-phospho-L-threonyl-[pyruvate, phosphate dikinase] + phosphate + H(+) = N(tele)-phospho-L-histidyl/L-threonyl-[pyruvate, phosphate dikinase] + diphosphate. In terms of biological role, bifunctional serine/threonine kinase and phosphorylase involved in the regulation of the pyruvate, phosphate dikinase (PPDK) by catalyzing its phosphorylation/dephosphorylation. This chain is Putative pyruvate, phosphate dikinase regulatory protein 1, found in Latilactobacillus sakei subsp. sakei (strain 23K) (Lactobacillus sakei subsp. sakei).